The primary structure comprises 1124 residues: SH3 and PX domain-containing protein 2A (1124 aa).

Residues 4–128 (YCVQDATVVD…RFFEARPEDV (125 aa)) form the PX domain. The 60-residue stretch at 166-225 (MILEQYVVVSNYKKQENSELSLQAGEVVDVIEKNESGWWFVSTSEEQGWVPATYLEAQNG) folds into the SH3 1 domain. Phosphothreonine is present on Thr-256. Residues 266-325 (SREEKYVTVQPYTSQSKDEIGFEKGVTVEVIRKNLEGWWYIRYLGKEGWAPASYLKKAKD) form the SH3 2 domain. A phosphoserine mark is found at Ser-405 and Ser-420. Disordered stretches follow at residues 414–443 (QRAQ…PKPP), 504–672 (RKKP…KLKA), 692–830 (SVTI…PKKE), and 886–952 (YLVA…GKTS). The SH3 3 domain maps to 447-506 (SVEVEYYTIAEFQSCISDGISFRGGQKAEVIDKNSGGWWYVQIGEKEGWAPASYIDKRKK). A phosphoserine mark is found at Ser-546 and Ser-566. Over residues 575 to 585 (SGDRGSGDKHP) the composition is skewed to basic and acidic residues. Ser-592 bears the Phosphoserine mark. The span at 607 to 619 (SSEDVALEEETIY) shows a compositional bias: acidic residues. Composition is skewed to low complexity over residues 633 to 669 (SARG…SLLK) and 692 to 709 (SVTI…SSLS). Position 643 is a phosphoserine (Ser-643). A compositionally biased stretch (basic and acidic residues) spans 713 to 739 (GDLKPRSASDAGIRDTPKVGTKKDPDV). Residue Thr-728 is modified to Phosphothreonine. Phosphoserine occurs at positions 764, 766, and 812. A Phosphothreonine modification is found at Thr-822. Positions 833 to 892 (GQGATYVTCSAYQKVQDSEISFPEGAEVHVLEKAESGWWYVRFGELEGWAPSHYLVAEEN) constitute an SH3 4 domain. A coiled-coil region spans residues 907–937 (SSQNEGKSDSLEKIEKRVQALNTVNQSKRAT). Basic and acidic residues predominate over residues 912 to 924 (GKSDSLEKIEKRV). Polar residues predominate over residues 926–935 (ALNTVNQSKR). Ser-993, Ser-1007, Ser-1008, and Ser-1029 each carry phosphoserine. The interval 1020 to 1050 (KGRLAERAASQGSESPLLPTQRKGIPVSPVR) is disordered. Positions 1063 to 1124 (NLKDVYISIA…VPSNYLEKKN (62 aa)) constitute an SH3 5 domain.

Belongs to the SH3PXD2 family. As to quaternary structure, interacts with ADAM12, ADAM15 and ADAM19. Interacts with NOXO1. Interacts (via SH3 domains) with NOXA1; the interaction is direct. Interacts (via N-terminus) with CYBA. Interacts with FASLG. Interacts (via PX domain) with RAB40B (GTP-bound); interaction promotes invadopodia-mediated extracellular matrix degradation. In terms of processing, tyrosine phosphorylated by SRC. Phosphorylation plays a regulatory role in the protein localization. The intramolecular interaction of the PX domain with the third SH3 domain maintains the protein in the cytoplasm and phosphorylation disrupts this interaction, resulting in the redistribution of the protein from cytoplasm to the perimembrane region. Phosphorylated on serine upon DNA damage, probably by ATM or ATR. Widely expressed. Not found in the spleen and testis.

The protein resides in the cytoplasm. Its subcellular location is the cell projection. It is found in the podosome. Functionally, adapter protein involved in invadopodia and podosome formation, extracellular matrix degradation and invasiveness of some cancer cells. Binds matrix metalloproteinases (ADAMs), NADPH oxidases (NOXs) and phosphoinositides. Acts as an organizer protein that allows NOX1- or NOX3-dependent reactive oxygen species (ROS) generation and ROS localization. In association with ADAM12, mediates the neurotoxic effect of amyloid-beta peptide. This is SH3 and PX domain-containing protein 2A from Mus musculus (Mouse).